The following is a 236-amino-acid chain: Probable metal transport system ATP-binding protein CT_416 (236 aa).

In terms of domain architecture, ABC transporter spans 5 to 236; sequence MLLENVSFRY…FCCNTFGRCP (232 aa). 39-46 lines the ATP pocket; that stretch reads GPNGGGKT.

The protein belongs to the ABC transporter superfamily.

It is found in the cell inner membrane. Its function is as follows. Part of an ATP-driven transport system CT_415/CT_416/CT_417 for a metal. Probably responsible for energy coupling to the transport system. This chain is Probable metal transport system ATP-binding protein CT_416, found in Chlamydia trachomatis serovar D (strain ATCC VR-885 / DSM 19411 / UW-3/Cx).